A 410-amino-acid chain; its full sequence is LL-diaminopimelate aminotransferase (410 aa).

Substrate is bound by residues Tyr15 and Gly42. Pyridoxal 5'-phosphate-binding positions include Tyr72, 108–109, Tyr132, Asn188, Tyr219, and 247–249; these read AK and SFS. Residues Lys109, Tyr132, and Asn188 each coordinate substrate. Lys250 carries the N6-(pyridoxal phosphate)lysine modification. 2 residues coordinate pyridoxal 5'-phosphate: Arg258 and Asn293. Substrate-binding residues include Asn293 and Arg389.

This sequence belongs to the class-I pyridoxal-phosphate-dependent aminotransferase family. LL-diaminopimelate aminotransferase subfamily. As to quaternary structure, homodimer. The cofactor is pyridoxal 5'-phosphate.

It catalyses the reaction (2S,6S)-2,6-diaminopimelate + 2-oxoglutarate = (S)-2,3,4,5-tetrahydrodipicolinate + L-glutamate + H2O + H(+). It functions in the pathway amino-acid biosynthesis; L-lysine biosynthesis via DAP pathway; LL-2,6-diaminopimelate from (S)-tetrahydrodipicolinate (aminotransferase route): step 1/1. Involved in the synthesis of meso-diaminopimelate (m-DAP or DL-DAP), required for both lysine and peptidoglycan biosynthesis. Catalyzes the direct conversion of tetrahydrodipicolinate to LL-diaminopimelate. This Bacteroides fragilis (strain YCH46) protein is LL-diaminopimelate aminotransferase.